Here is a 34-residue protein sequence, read N- to C-terminus: Ornithine carbamoyltransferase, catabolic (34 aa).

It belongs to the aspartate/ornithine carbamoyltransferase superfamily. OTCase family. As to quaternary structure, probably nonameric or dodecameric.

The protein resides in the cytoplasm. The catalysed reaction is carbamoyl phosphate + L-ornithine = L-citrulline + phosphate + H(+). Its pathway is amino-acid degradation; L-arginine degradation via ADI pathway; carbamoyl phosphate from L-arginine: step 2/2. In Pseudomonas putida (Arthrobacter siderocapsulatus), this protein is Ornithine carbamoyltransferase, catabolic (arcB).